The primary structure comprises 533 residues: D-2-hydroxyglutarate dehydrogenase, mitochondrial (533 aa).

A mitochondrion-targeting transit peptide spans 1 to 55; the sequence is MGLFQKCSRLSLRSSYMWSVCPQYSIAVTARETPDRALIVHWTQHRDVHNSRRLG. An FAD-binding PCMH-type domain is found at 107-286; it reads VQGSSDVLLR…TAVSILCPRK (180 aa). The (R)-2-hydroxyglutarate site is built by R397, T401, and K412. R397 serves as a coordination point for (R)-lactate. Residues R397, T401, and K412 each coordinate (R)-malate. 2 residues coordinate Zn(2+): H445 and H452. A (R)-2-hydroxyglutarate-binding site is contributed by N454. E486 serves as a coordination point for Zn(2+). H487 is a (R)-2-hydroxyglutarate binding site. H487 lines the (R)-lactate pocket. A (R)-malate-binding site is contributed by H487.

It belongs to the FAD-binding oxidoreductase/transferase type 4 family. Requires FAD as cofactor.

The protein resides in the mitochondrion. The enzyme catalyses (R)-2-hydroxyglutarate + A = 2-oxoglutarate + AH2. The catalysed reaction is (R)-malate + A = oxaloacetate + AH2. Catalyzes the oxidation of D-2-hydroxyglutarate (D-2-HG) to alpha-ketoglutarate. Also catalyzes the oxidation of other D-2-hydroxyacids, such as D-malate (D-MAL) and D-lactate (D-LAC). Exhibits high activities towards D-2-HG and D-MAL but a very weak activity towards D-LAC. The chain is D-2-hydroxyglutarate dehydrogenase, mitochondrial (d2hgdh) from Danio rerio (Zebrafish).